The primary structure comprises 246 residues: Exosome complex component Rrp41 (246 aa).

This sequence belongs to the RNase PH family. Rrp41 subfamily. Component of the archaeal exosome complex. Forms a hexameric ring-like arrangement composed of 3 Rrp41-Rrp42 heterodimers. The hexameric ring associates with a trimer of Rrp4 and/or Csl4 subunits.

The protein localises to the cytoplasm. Catalytic component of the exosome, which is a complex involved in RNA degradation. Has 3'-&gt;5' exoribonuclease activity. Can also synthesize heteromeric RNA-tails. This Pyrobaculum aerophilum (strain ATCC 51768 / DSM 7523 / JCM 9630 / CIP 104966 / NBRC 100827 / IM2) protein is Exosome complex component Rrp41.